A 229-amino-acid chain; its full sequence is Putative N-acetylmannosamine-6-phosphate 2-epimerase (229 aa).

Belongs to the NanE family.

It catalyses the reaction an N-acyl-D-glucosamine 6-phosphate = an N-acyl-D-mannosamine 6-phosphate. The protein operates within amino-sugar metabolism; N-acetylneuraminate degradation; D-fructose 6-phosphate from N-acetylneuraminate: step 3/5. In terms of biological role, converts N-acetylmannosamine-6-phosphate (ManNAc-6-P) to N-acetylglucosamine-6-phosphate (GlcNAc-6-P). The sequence is that of Putative N-acetylmannosamine-6-phosphate 2-epimerase from Cutibacterium acnes (strain DSM 16379 / KPA171202) (Propionibacterium acnes).